We begin with the raw amino-acid sequence, 51 residues long: Sperm protamine P1 (51 aa).

2 disulfides stabilise this stretch: C7–C15 and C40–C48.

This sequence belongs to the protamine P1 family. In terms of assembly, cross-linked by interchain disulfide bonds around the DNA-helix. Post-translationally, phosphorylated by SRPK1. In terms of tissue distribution, testis.

Its subcellular location is the nucleus. It localises to the chromosome. Protamines substitute for histones in the chromatin of sperm during the haploid phase of spermatogenesis. They compact sperm DNA into a highly condensed, stable and inactive complex. In Bos taurus (Bovine), this protein is Sperm protamine P1 (PRM1).